The following is a 447-amino-acid chain: BAG family molecular chaperone regulator 5 (447 aa).

5 consecutive BAG domains span residues 9–86 (SISR…EQNA), 95–167 (QNIF…ENCM), 182–260 (SVAK…DLEE), 275–350 (SILK…DLKE), and 365–442 (SHKA…DLKS).

Binds to the ATPase domain of HSP/HSP70 chaperones. Binds PRKN. Interacts complex with HSPA8 and JPH2.

Its function is as follows. Co-chaperone for HSP/HSP70 proteins. It functions as a nucleotide-exchange factor promoting the release of ADP from HSP70, thereby activating Hsp70-mediated protein refolding. Has an essential role in maintaining proteostasis at junctional membrane complexes (JMC), where it may function as a scaffold between the HSPA8 chaperone and JMC proteins enabling correct, HSPA8-dependent JMC protein folding. Inhibits both auto-ubiquitination of PRKN and ubiquitination of target proteins by PRKN. This is BAG family molecular chaperone regulator 5 (BAG5) from Bos taurus (Bovine).